Reading from the N-terminus, the 124-residue chain is NADH dehydrogenase [ubiquinone] iron-sulfur protein 6, mitochondrial (124 aa).

The N-terminal 28 residues, 1–28 (MAAAMTFCRLLNRCGEAARSLPLGARCF), are a transit peptide targeting the mitochondrion. N6-acetyllysine is present on Lys98.

The protein belongs to the complex I NDUFS6 subunit family. Mammalian complex I is composed of 45 different subunits. This is a component of the iron-sulfur (IP) fragment of the enzyme.

It localises to the mitochondrion inner membrane. Accessory subunit of the mitochondrial membrane respiratory chain NADH dehydrogenase (Complex I), that is believed not to be involved in catalysis. Complex I functions in the transfer of electrons from NADH to the respiratory chain. The immediate electron acceptor for the enzyme is believed to be ubiquinone. This is NADH dehydrogenase [ubiquinone] iron-sulfur protein 6, mitochondrial (NDUFS6) from Gorilla gorilla gorilla (Western lowland gorilla).